The sequence spans 373 residues: Transaminase AMT5 (373 aa).

Arg92 is a pyridoxal 5'-phosphate binding site. An N6-(pyridoxal phosphate)lysine modification is found at Lys196. Glu232 is a binding site for pyridoxal 5'-phosphate.

The protein belongs to the class-IV pyridoxal-phosphate-dependent aminotransferase family. It depends on pyridoxal 5'-phosphate as a cofactor.

It participates in mycotoxin biosynthesis. Transaminase; part of the gene clusters that mediate the biosynthesis of AM-toxins, host-selective toxins (HSTs) causing Alternaria blotch on apple, a worldwide distributed disease. AM-toxins are cyclic depsipeptides containing the 3 residues 2-hydroxy-isovaleric acid (2-HIV), dehydroalanine, L-alanine which are common for all 3 AM-toxins I to III. The fourth precursor is L-alpha-amino-methoxyphenyl-valeric acid (L-Amv) for AM-toxin I, L-alpha-amino-phenyl-valeric acid (L-Apv) for AM-toxin II, and L-alpha-amino-hydroxyphenyl-valeric acid (L-Ahv) for AM-toxin III. AM-toxins have two target sites for affecting susceptible apple cells; they cause invagination of the plasma membrane and electrolyte loss and chloroplast disorganization. The non-ribosomal peptide synthetase AMT1 contains 4 catalytic modules and is responsible for activation of each residue in AM-toxin. The aldo-keto reductase AMT2 catalyzes the conversion of 2-keto-isovaleric acid (2-KIV) to 2-hydroxy-isovaleric acid (2-HIV), one of the precursor residues incorporated by AMT1 during AM-toxin biosynthesis, by reduction of its ketone to an alcohol. The cytochrome P450 monooxygenase AMT3 and the thioesterase AMT4 are also important for AM-toxin production, but their exact function within the AM-toxin biosynthesis are not known yet. Up to 21 proteins (including AMT1 to AMT4) are predicted to be involved in AM-toxin biosynthesis since their expression is highly up-regulated in AM-toxin-producing cultures. This chain is Transaminase AMT5, found in Alternaria alternata (Alternaria rot fungus).